A 358-amino-acid polypeptide reads, in one-letter code: Metacaspase-3 (358 aa).

The interval 1–84 (MGFDFGCLLK…APTHVSGTFR (84 aa)) is important for catalytic activity. Catalysis depends on residues H168 and C223.

Belongs to the peptidase C14B family. In terms of processing, in epimastigotes, the unprocessed enzyme appears to be the main form. Auto-processing is dispensable for catalytic activity towards small oligopeptide substrates.

It localises to the cytoplasm. It is found in the nucleus. With respect to regulation, activated by Ca(2+). Its function is as follows. Cysteine protease that cleaves specifically after arginine or lysine residues. In epimastigotes, may play a role in cell cycle G1/S transition. The sequence is that of Metacaspase-3 from Trypanosoma cruzi (strain CL Brener).